Here is a 348-residue protein sequence, read N- to C-terminus: Outer membrane protein assembly factor BamC (348 aa).

A signal peptide spans 1–19 (MKYSHQLVIGSLAVFVLTA). The N-palmitoyl cysteine moiety is linked to residue cysteine 20. Cysteine 20 is lipidated: S-diacylglycerol cysteine.

This sequence belongs to the BamC family. Part of the Bam complex.

The protein resides in the cell outer membrane. In terms of biological role, part of the outer membrane protein assembly complex, which is involved in assembly and insertion of beta-barrel proteins into the outer membrane. This chain is Outer membrane protein assembly factor BamC, found in Vibrio atlanticus (strain LGP32) (Vibrio splendidus (strain Mel32)).